The following is a 337-amino-acid chain: Putative carbonic anhydrase-like protein 2 (337 aa).

Positions 1 to 16 are cleaved as a signal peptide; it reads MIPWLLTACIYPCVIG. The Alpha-carbonic anhydrase domain maps to 17-274; that stretch reads PDFWGLLHGD…LNGRLVRTNI (258 aa). The active site involves tyrosine 140. N-linked (GlcNAc...) asparagine glycosylation occurs at asparagine 188. 212 to 213 lines the substrate pocket; that stretch reads TF.

This sequence belongs to the alpha-carbonic anhydrase family.

It is found in the secreted. The polypeptide is Putative carbonic anhydrase-like protein 2 (cah-2) (Caenorhabditis elegans).